The primary structure comprises 404 residues: L-cysteine:1D-myo-inositol 2-amino-2-deoxy-alpha-D-glucopyranoside ligase (404 aa).

Residues 1 to 20 (MRTWPTPDVPPLPRTGAPAP) form a disordered region. Cys-45 contributes to the Zn(2+) binding site. L-cysteinyl-5'-AMP-binding positions include 45–48 (CGIT), Thr-60, and 83–85 (NVT). The 'HIGH' region signature appears at 47–57 (ITPYDATHLGH). The short motif at 185–190 (ERGGDP) is the 'ERGGDP' region element. A disordered region spans residues 185–216 (ERGGDPDRPGKKHPLDPALWRGEQPGEPSWDG). Over residues 186–199 (RGGDPDRPGKKHPL) the composition is skewed to basic and acidic residues. Residue Trp-226 participates in L-cysteinyl-5'-AMP binding. Cys-230 is a binding site for Zn(2+). Residue 248–250 (GAD) coordinates L-cysteinyl-5'-AMP. His-255 is a binding site for Zn(2+). Leu-280 is a binding site for L-cysteinyl-5'-AMP. The short motif at 286–290 (KMSKS) is the 'KMSKS' region element.

The protein belongs to the class-I aminoacyl-tRNA synthetase family. MshC subfamily. As to quaternary structure, monomer. Zn(2+) is required as a cofactor.

It carries out the reaction 1D-myo-inositol 2-amino-2-deoxy-alpha-D-glucopyranoside + L-cysteine + ATP = 1D-myo-inositol 2-(L-cysteinylamino)-2-deoxy-alpha-D-glucopyranoside + AMP + diphosphate + H(+). In terms of biological role, catalyzes the ATP-dependent condensation of GlcN-Ins and L-cysteine to form L-Cys-GlcN-Ins. This chain is L-cysteine:1D-myo-inositol 2-amino-2-deoxy-alpha-D-glucopyranoside ligase, found in Xylanimonas cellulosilytica (strain DSM 15894 / JCM 12276 / CECT 5975 / KCTC 9989 / LMG 20990 / NBRC 107835 / XIL07).